Reading from the N-terminus, the 283-residue chain is Bifunctional protein FolD (283 aa).

NADP(+) is bound by residues Gly-165–Ser-167 and Ser-190.

It belongs to the tetrahydrofolate dehydrogenase/cyclohydrolase family. In terms of assembly, homodimer.

It carries out the reaction (6R)-5,10-methylene-5,6,7,8-tetrahydrofolate + NADP(+) = (6R)-5,10-methenyltetrahydrofolate + NADPH. It catalyses the reaction (6R)-5,10-methenyltetrahydrofolate + H2O = (6R)-10-formyltetrahydrofolate + H(+). It functions in the pathway one-carbon metabolism; tetrahydrofolate interconversion. In terms of biological role, catalyzes the oxidation of 5,10-methylenetetrahydrofolate to 5,10-methenyltetrahydrofolate and then the hydrolysis of 5,10-methenyltetrahydrofolate to 10-formyltetrahydrofolate. The polypeptide is Bifunctional protein FolD (Paracidovorax citrulli (strain AAC00-1) (Acidovorax citrulli)).